The sequence spans 623 residues: Flap endonuclease 1 (623 aa).

The tract at residues 1 to 106 is N-domain; sequence MGIKGLTKFI…SELEKRGEKR (106 aa). Asp34 provides a ligand contact to Mg(2+). Positions 47 and 72 each coordinate DNA. The Mg(2+) site is built by Asp88, Glu160, Glu162, Asp181, and Asp183. The tract at residues 124-267 is I-domain; the sequence is EIKKQSGRTV…KTAYNLIKEY (144 aa). Glu160 is a binding site for DNA. Gly245 and Asp247 together coordinate DNA. Asp247 contacts Mg(2+). Residues 350–358 form an interaction with PCNA region; the sequence is TQRRLDNFF. Residues 368–517 are disordered; the sequence is LVIEESQSQS…LSSNSTLHSC (150 aa). Composition is skewed to basic and acidic residues over residues 410-424 and 466-482; these read TKVEKEPKREKKDEE and QKSDSESGNVKKEKTEQ. Polar residues predominate over residues 502–517; the sequence is AGSNTHLSSNSTLHSC.

Belongs to the XPG/RAD2 endonuclease family. FEN1 subfamily. As to quaternary structure, interacts with PCNA. Three molecules of FEN1 bind to one PCNA trimer with each molecule binding to one PCNA monomer. PCNA stimulates the nuclease activity without altering cleavage specificity. The cofactor is Mg(2+). Phosphorylated. Phosphorylation upon DNA damage induces relocalization to the nuclear plasma.

The protein localises to the nucleus. The protein resides in the nucleolus. Its subcellular location is the nucleoplasm. It localises to the mitochondrion. Structure-specific nuclease with 5'-flap endonuclease and 5'-3' exonuclease activities involved in DNA replication and repair. During DNA replication, cleaves the 5'-overhanging flap structure that is generated by displacement synthesis when DNA polymerase encounters the 5'-end of a downstream Okazaki fragment. It enters the flap from the 5'-end and then tracks to cleave the flap base, leaving a nick for ligation. Also involved in the long patch base excision repair (LP-BER) pathway, by cleaving within the apurinic/apyrimidinic (AP) site-terminated flap. Acts as a genome stabilization factor that prevents flaps from equilibrating into structures that lead to duplications and deletions. Also possesses 5'-3' exonuclease activity on nicked or gapped double-stranded DNA, and exhibits RNase H activity. Also involved in replication and repair of rDNA and in repairing mitochondrial DNA. The protein is Flap endonuclease 1 of Plasmodium vivax (strain Salvador I).